Here is a 616-residue protein sequence, read N- to C-terminus: UvrABC system protein C (616 aa).

One can recognise a GIY-YIG domain in the interval 21–100 (TCPGVYQFKN…IKDLKPRYNI (80 aa)). Residues 214 to 249 (GALIRTLSAEMHRYADELRFEEAAELKIQIEGLRKY) enclose the UVR domain.

The protein belongs to the UvrC family. In terms of assembly, interacts with UvrB in an incision complex.

The protein resides in the cytoplasm. The UvrABC repair system catalyzes the recognition and processing of DNA lesions. UvrC both incises the 5' and 3' sides of the lesion. The N-terminal half is responsible for the 3' incision and the C-terminal half is responsible for the 5' incision. This Prosthecochloris aestuarii (strain DSM 271 / SK 413) protein is UvrABC system protein C.